The chain runs to 508 residues: Tryptamine 4-monooxygenase (508 aa).

A signal peptide spans 1–19; sequence MIAVLFSFVIAGCIYYIVS. Cys-439 contributes to the heme binding site.

The protein belongs to the cytochrome P450 family. It depends on heme as a cofactor.

It catalyses the reaction tryptamine + AH2 + O2 = 4-hydroxytryptamine + A + H2O. The protein operates within secondary metabolite biosynthesis. Its function is as follows. Cytochrome P450 monooxygenase; part of the gene cluster that mediates the biosynthesis of psilocybin, a psychotropic tryptamine-derived natural product. The first step in the pathway is the decarboxylation of L-tryptophan to tryptamine by the decarboxylase psiD. 4-hydroxy-L-tryptophan is accepted as substrate by psiD as well. The cytochrome P450 monooxygenase psiH then converts tryptamine to 4-hydroxytryptamine. The kinase psiK catalyzes the 4-O-phosphorylation step by converting 4-hydroxytryptamine into norbaeocystin. The methyltransferase psiM then catalyzes iterative methyl transfer to the amino group of norbaeocystin to yield psilocybin via a monomethylated intermediate, baeocystin. The protein is Tryptamine 4-monooxygenase of Psilocybe cubensis (Psychedelic mushroom).